The following is a 437-amino-acid chain: Protein translocase subunit SecY (437 aa).

The next 10 helical transmembrane spans lie at 19 to 39, 69 to 89, 122 to 142, 157 to 177, 189 to 209, 219 to 239, 275 to 295, 318 to 338, 378 to 398, and 400 to 420; these read LFTL…IPGV, LLQI…SIIL, VALA…GALF, IFTT…VMWL, GMSI…LWAI, WIEF…VVFV, GVIP…IVQF, HIIL…AISF, GSLY…GFGA, and QNFP…LETV.

It belongs to the SecY/SEC61-alpha family. In terms of assembly, component of the Sec protein translocase complex. Heterotrimer consisting of SecY, SecE and SecG subunits. The heterotrimers can form oligomers, although 1 heterotrimer is thought to be able to translocate proteins. Interacts with the ribosome. Interacts with SecDF, and other proteins may be involved. Interacts with SecA.

Its subcellular location is the cell membrane. The central subunit of the protein translocation channel SecYEG. Consists of two halves formed by TMs 1-5 and 6-10. These two domains form a lateral gate at the front which open onto the bilayer between TMs 2 and 7, and are clamped together by SecE at the back. The channel is closed by both a pore ring composed of hydrophobic SecY resides and a short helix (helix 2A) on the extracellular side of the membrane which forms a plug. The plug probably moves laterally to allow the channel to open. The ring and the pore may move independently. The polypeptide is Protein translocase subunit SecY (Streptomyces lividans).